The sequence spans 121 residues: Methylglyoxal synthase (121 aa).

In terms of domain architecture, MGS-like spans 1–121; that stretch reads MMKVALIAHD…SAELFLRALN (121 aa). Residues H9, K13, 35–38, and 55–56 each bind substrate; these read TGTT and SG. D61 (proton donor/acceptor) is an active-site residue. H88 contacts substrate.

Belongs to the methylglyoxal synthase family.

The catalysed reaction is dihydroxyacetone phosphate = methylglyoxal + phosphate. In terms of biological role, catalyzes the formation of methylglyoxal from dihydroxyacetone phosphate. This chain is Methylglyoxal synthase, found in Carboxydothermus hydrogenoformans (strain ATCC BAA-161 / DSM 6008 / Z-2901).